A 152-amino-acid chain; its full sequence is Large-conductance mechanosensitive channel (152 aa).

Helical transmembrane passes span 14–34 (VIDL…VTSL) and 81–101 (GLFL…FIVI).

The protein belongs to the MscL family. In terms of assembly, homopentamer.

It localises to the cell membrane. Channel that opens in response to stretch forces in the membrane lipid bilayer. May participate in the regulation of osmotic pressure changes within the cell. In Clostridium perfringens (strain ATCC 13124 / DSM 756 / JCM 1290 / NCIMB 6125 / NCTC 8237 / Type A), this protein is Large-conductance mechanosensitive channel.